A 317-amino-acid polypeptide reads, in one-letter code: Acetylglutamate kinase (317 aa).

Residues 70–71, R92, and N191 each bind substrate; that span reads GG.

It belongs to the acetylglutamate kinase family. ArgB subfamily.

The protein localises to the cytoplasm. It carries out the reaction N-acetyl-L-glutamate + ATP = N-acetyl-L-glutamyl 5-phosphate + ADP. The protein operates within amino-acid biosynthesis; L-arginine biosynthesis; N(2)-acetyl-L-ornithine from L-glutamate: step 2/4. Catalyzes the ATP-dependent phosphorylation of N-acetyl-L-glutamate. The sequence is that of Acetylglutamate kinase from Corynebacterium glutamicum (strain R).